A 143-amino-acid chain; its full sequence is Hemoglobin subunit alpha-1 (143 aa).

Ser-2 bears the N-acetylserine mark. The region spanning Ser-2–Arg-143 is the Globin domain. His-60 is a binding site for O2. Position 89 (His-89) interacts with heme b.

Belongs to the globin family. In terms of assembly, hb 1 is a heterotetramer of two alpha-1 and two beta chains. As to expression, red blood cells.

Its function is as follows. Involved in oxygen transport from gills to the various peripheral tissues. This is Hemoglobin subunit alpha-1 (hba1) from Cottoperca gobio (Frogmouth).